Here is a 361-residue protein sequence, read N- to C-terminus: MLVSDFHFDLPDELIARYPTEERTASRLLHLNGETGHFEDKQFFDLLDQINEGDLLIFNNTRVIPARLYGRKASGGKLEILVERVLDEHRCLAHVRASKAPKEGAELVLGEDKLGEGNGFKAIMTARHDALFELHFNEEQPLFDLLQQAGHMPLPPYIDRPDEDADQERYQTVYSKVLGAVAAPTAGLHFDNPTLEKLKAKGVNIAFVTLHVGAGTFQPVRVDNILDHKMHAEYAEVSQAVVDQILATKATGKRVIAVGTTSVRSIESAAQAAEKEGKLITPFFSDTSIFLYPGKTFRIVDALVTNFHLPESTLIMLVSAFAGYRNTMKAYQHAVEAKYRFFSYGDAMFINKNPNALNDLP.

The protein belongs to the QueA family. Monomer.

The protein localises to the cytoplasm. It carries out the reaction 7-aminomethyl-7-carbaguanosine(34) in tRNA + S-adenosyl-L-methionine = epoxyqueuosine(34) in tRNA + adenine + L-methionine + 2 H(+). The protein operates within tRNA modification; tRNA-queuosine biosynthesis. Its function is as follows. Transfers and isomerizes the ribose moiety from AdoMet to the 7-aminomethyl group of 7-deazaguanine (preQ1-tRNA) to give epoxyqueuosine (oQ-tRNA). This chain is S-adenosylmethionine:tRNA ribosyltransferase-isomerase, found in Actinobacillus pleuropneumoniae serotype 5b (strain L20).